Consider the following 158-residue polypeptide: Class 10 plant pathogenesis-related protein 2D (158 aa).

Position 8 (Asp-8) interacts with trans-zeatin. Ca(2+)-binding residues include Pro-32, Val-35, and Ile-38. Residues Glu-60, His-69, Tyr-81, and Tyr-83 each contribute to the trans-zeatin site.

The protein belongs to the BetVI family.

The protein resides in the cytoplasm. Its subcellular location is the cytosol. Class II ribonuclease (RNase). Binds to cytokinins. Interacts with melatonin. In Lupinus luteus (European yellow lupine), this protein is Class 10 plant pathogenesis-related protein 2D.